Reading from the N-terminus, the 487-residue chain is Protein nucleotidyltransferase YdiU (487 aa).

Residues G90, G92, R93, K113, D125, G126, R176, and R183 each contribute to the ATP site. D252 functions as the Proton acceptor in the catalytic mechanism. Positions 253 and 262 each coordinate Mg(2+). Residue D262 coordinates ATP.

The protein belongs to the SELO family. Mg(2+) serves as cofactor. Mn(2+) is required as a cofactor.

It carries out the reaction L-seryl-[protein] + ATP = 3-O-(5'-adenylyl)-L-seryl-[protein] + diphosphate. The catalysed reaction is L-threonyl-[protein] + ATP = 3-O-(5'-adenylyl)-L-threonyl-[protein] + diphosphate. It catalyses the reaction L-tyrosyl-[protein] + ATP = O-(5'-adenylyl)-L-tyrosyl-[protein] + diphosphate. The enzyme catalyses L-histidyl-[protein] + UTP = N(tele)-(5'-uridylyl)-L-histidyl-[protein] + diphosphate. It carries out the reaction L-seryl-[protein] + UTP = O-(5'-uridylyl)-L-seryl-[protein] + diphosphate. The catalysed reaction is L-tyrosyl-[protein] + UTP = O-(5'-uridylyl)-L-tyrosyl-[protein] + diphosphate. Functionally, nucleotidyltransferase involved in the post-translational modification of proteins. It can catalyze the addition of adenosine monophosphate (AMP) or uridine monophosphate (UMP) to a protein, resulting in modifications known as AMPylation and UMPylation. The protein is Protein nucleotidyltransferase YdiU of Ectopseudomonas mendocina (strain ymp) (Pseudomonas mendocina).